The sequence spans 468 residues: MTQVSTPVRTRFAPSPTGFIHLGNIRSALYPWAFARATGGTFVLRIEDTDVERSSQAAVDVIVEGMKWLGLDHDEGPFFQMQRMARYKEVLAQLVARGQVYPCYMSMTELDALRERQMANKEKPRYDGTWRPEPGKVLPAVPEGVQPVLRFRTPQGGSVIWDDKVKGRIEISNDELDDLVIARPDGTPTYNFCVVVDDIDMAITHVIRGDDHVNNTPRQIHIFRALGQEPPVYAHLPTVLNEQGEKMSKRHGAKPVTQYREEGFLADAVVNYLARLGWSHGDDEIFSRAQLIEWFNLDHLGKSAGQYDEAKLRWVNSQHMKLCDNGVLAGLVAEQFARRELLVPVDERLARMCALFKDRCSTTVELADWLSMYFVPIQASEQDLAAHVTDAVRPALQTLRDKLAALASWDKASISLCIKETIATHALKMPLLAVPVRVLVTGRAQTPSVDAVLELFQQEIVLKRLQSV.

The 'HIGH' region signature appears at 14-24 (PSPTGFIHLGN). The 'KMSKS' region motif lies at 246 to 250 (KMSKR). Lys249 contributes to the ATP binding site.

This sequence belongs to the class-I aminoacyl-tRNA synthetase family. Glutamate--tRNA ligase type 1 subfamily. Monomer.

It is found in the cytoplasm. It carries out the reaction tRNA(Glu) + L-glutamate + ATP = L-glutamyl-tRNA(Glu) + AMP + diphosphate. Functionally, catalyzes the attachment of glutamate to tRNA(Glu) in a two-step reaction: glutamate is first activated by ATP to form Glu-AMP and then transferred to the acceptor end of tRNA(Glu). The chain is Glutamate--tRNA ligase from Leptothrix cholodnii (strain ATCC 51168 / LMG 8142 / SP-6) (Leptothrix discophora (strain SP-6)).